The following is a 412-amino-acid chain: MASINDNYLKLKAGYLFPEIARRVNAFTTANPNAQVIKLGIGDVTEPLPLACRQAMAKAIDDMGDRQTFKGYGPEQGYAWLREKIAQHDFQARGCEVNAEEIFISDGSKCDTGNILDIFGKDNTIAVTDPVYPVYVDTNVMAGHTGDANEKGEYGGLVYLPISAENDFVAAIPSKKVDLIYLCFPNNPTGATATKAYLKQWVDYALAHGSIIFFDAAYEAFITDPTLPHSIYEIEGARDCAIEFRSFSKNAGFTGTRCALTVVPKTLTAKAADGSDVELWKLWNRRQSTKFNGVSYIIQRGAEAVYSPEGQAQVQELIAFYLENARIIREKLAAAGLQVYGGINAPYVWVKTPHGLSSWDFFDKLLHTVNVVGTPGSGFGAAGEGYFRISAFNSRANVEEAMERITSTLKLG.

2 residues coordinate substrate: Tyr-15 and Gly-42. Pyridoxal 5'-phosphate contacts are provided by residues Tyr-72, 108-109 (SK), Tyr-132, Asn-187, Tyr-218, and 246-248 (SFS). Substrate-binding residues include Lys-109, Tyr-132, and Asn-187. Lys-249 is modified (N6-(pyridoxal phosphate)lysine). The pyridoxal 5'-phosphate site is built by Arg-257 and Asn-292. Substrate-binding residues include Asn-292 and Arg-388.

This sequence belongs to the class-I pyridoxal-phosphate-dependent aminotransferase family. LL-diaminopimelate aminotransferase subfamily. As to quaternary structure, homodimer. The cofactor is pyridoxal 5'-phosphate.

The enzyme catalyses (2S,6S)-2,6-diaminopimelate + 2-oxoglutarate = (S)-2,3,4,5-tetrahydrodipicolinate + L-glutamate + H2O + H(+). It participates in amino-acid biosynthesis; L-lysine biosynthesis via DAP pathway; LL-2,6-diaminopimelate from (S)-tetrahydrodipicolinate (aminotransferase route): step 1/1. In terms of biological role, involved in the synthesis of meso-diaminopimelate (m-DAP or DL-DAP), required for both lysine and peptidoglycan biosynthesis. Catalyzes the direct conversion of tetrahydrodipicolinate to LL-diaminopimelate. The protein is LL-diaminopimelate aminotransferase of Synechocystis sp. (strain ATCC 27184 / PCC 6803 / Kazusa).